Consider the following 476-residue polypeptide: Aspartyl/glutamyl-tRNA(Asn/Gln) amidotransferase subunit B (476 aa).

Belongs to the GatB/GatE family. GatB subfamily. In terms of assembly, heterotrimer of A, B and C subunits.

The catalysed reaction is L-glutamyl-tRNA(Gln) + L-glutamine + ATP + H2O = L-glutaminyl-tRNA(Gln) + L-glutamate + ADP + phosphate + H(+). It carries out the reaction L-aspartyl-tRNA(Asn) + L-glutamine + ATP + H2O = L-asparaginyl-tRNA(Asn) + L-glutamate + ADP + phosphate + 2 H(+). Allows the formation of correctly charged Asn-tRNA(Asn) or Gln-tRNA(Gln) through the transamidation of misacylated Asp-tRNA(Asn) or Glu-tRNA(Gln) in organisms which lack either or both of asparaginyl-tRNA or glutaminyl-tRNA synthetases. The reaction takes place in the presence of glutamine and ATP through an activated phospho-Asp-tRNA(Asn) or phospho-Glu-tRNA(Gln). The protein is Aspartyl/glutamyl-tRNA(Asn/Gln) amidotransferase subunit B of Oceanobacillus iheyensis (strain DSM 14371 / CIP 107618 / JCM 11309 / KCTC 3954 / HTE831).